A 507-amino-acid polypeptide reads, in one-letter code: Extracellular elastase (507 aa).

The signal sequence occupies residues 1–28 (MKNFSKFALTSIAALTVASPLVNTEVDA). Positions 29–207 (KDKVSATQNI…VVDKLNMIKE (179 aa)) are excised as a propeptide. D347 is a Ca(2+) binding site. H351 is a binding site for Zn(2+). E352 is a catalytic residue. 2 residues coordinate Zn(2+): H355 and E375. Ca(2+) contacts are provided by D386, E388, D389, L391, E394, Y397, T398, V401, and D404. H435 acts as the Proton donor in catalysis.

Belongs to the peptidase M4 family. It depends on Ca(2+) as a cofactor. Zn(2+) is required as a cofactor.

It localises to the secreted. Its function is as follows. Protease that has a low substrate specificity. Glucagon is preferentially cleaved between aromatic (Phe) and hydrophobic (Val) amino acids. Hydrolyzes casein and elastin. The chain is Extracellular elastase (sepA) from Staphylococcus epidermidis (strain ATCC 12228 / FDA PCI 1200).